Here is a 262-residue protein sequence, read N- to C-terminus: Indole-3-glycerol phosphate synthase (262 aa).

It belongs to the TrpC family.

The catalysed reaction is 1-(2-carboxyphenylamino)-1-deoxy-D-ribulose 5-phosphate + H(+) = (1S,2R)-1-C-(indol-3-yl)glycerol 3-phosphate + CO2 + H2O. It functions in the pathway amino-acid biosynthesis; L-tryptophan biosynthesis; L-tryptophan from chorismate: step 4/5. This is Indole-3-glycerol phosphate synthase from Bordetella bronchiseptica (strain ATCC BAA-588 / NCTC 13252 / RB50) (Alcaligenes bronchisepticus).